A 420-amino-acid chain; its full sequence is Methylaspartate ammonia-lyase 1 (420 aa).

Residue Gln-173 coordinates (2S,3S)-3-methyl-L-aspartate. Mg(2+) contacts are provided by Asp-237, Glu-272, and Asp-306. Gln-328 contacts (2S,3S)-3-methyl-L-aspartate. Lys-330 (proton acceptor) is an active-site residue. Position 359 to 360 (359 to 360 (SC)) interacts with (2S,3S)-3-methyl-L-aspartate.

Homodimer. Mg(2+) is required as a cofactor.

The enzyme catalyses (2S,3S)-3-methyl-L-aspartate = mesaconate + NH4(+). It functions in the pathway amino-acid degradation; L-glutamate degradation via mesaconate pathway; acetate and pyruvate from L-glutamate: step 2/4. In terms of biological role, involved in the methylaspartate cycle. Catalyzes the formation of the alpha,beta-unsaturated bond by the reversible anti elimination of ammonia from L-threo-beta-methylaspartate (L-threo-(2S,3S)-3-methylaspartate) to give mesaconate. It can also catalyze the amination of fumarate and ethylfumarate, and the deamination of hydroxylamine, hydrazine, methylamine and ethylamine. The sequence is that of Methylaspartate ammonia-lyase 1 from Carboxydothermus hydrogenoformans (strain ATCC BAA-161 / DSM 6008 / Z-2901).